The following is a 182-amino-acid chain: Ribosome maturation factor RimM (182 aa).

Residues 103–182 (EGDYYWKDLM…SIEVDWDPGF (80 aa)) form the PRC barrel domain.

This sequence belongs to the RimM family. In terms of assembly, binds ribosomal protein uS19.

The protein localises to the cytoplasm. Its function is as follows. An accessory protein needed during the final step in the assembly of 30S ribosomal subunit, possibly for assembly of the head region. Essential for efficient processing of 16S rRNA. May be needed both before and after RbfA during the maturation of 16S rRNA. It has affinity for free ribosomal 30S subunits but not for 70S ribosomes. This chain is Ribosome maturation factor RimM, found in Escherichia coli O139:H28 (strain E24377A / ETEC).